A 969-amino-acid chain; its full sequence is Activity-dependent neuroprotective protein a (969 aa).

A C2H2-type 1 zinc finger spans residues 74 to 97; sequence FCCSDCPFASKYFSAYKNHFRNVH. A C2H2-type 2; atypical zinc finger spans residues 107 to 129; the sequence is LNCSYCTYSGNKRTLETHVRLFH. 2 consecutive C2H2-type zinc fingers follow at residues 169–192 and 221–244; these read YYCK…YREH and IHCK…IEFH. A C2H2-type 5; atypical zinc finger spans residues 401-423; sequence KICTICNELFPESAYSAHFEKEH. A C2H2-type 6; atypical zinc finger spans residues 443–464; the sequence is SKCLYCNRYLPSDSLLNHMLVH. The C2H2-type 7 zinc-finger motif lies at 466–489; sequence LSCPHCHSTFHEVEKIVAHNRLAH. The C2H2-type 8; atypical zinc-finger motif lies at 583-608; that stretch reads TLCPLCFTILKGPISDALAHHLRDSH. The segment at 623–647 adopts a C2H2-type 9; atypical zinc-finger fold; the sequence is YKCIHCLGVYTSNMTASTITLHLVH. The interval 659 to 689 is disordered; the sequence is KPITTGLRSPGAGSLKRELVTPDPSDPKRRK. The homeobox DNA-binding region spans 732–774; it reads AYFNRHPYPSQREVEKLAASLWLWKSDVASHFGNHRRLCDRDF. The disordered stretch occupies residues 911 to 949; it reads DVRANRSSPRVGPKVLDGSVSSSSPDEATWSGNMSSEES. The span at 929-946 shows a compositional bias: polar residues; that stretch reads SVSSSSPDEATWSGNMSS.

Interacts with catenin beta-1/ctnnb1.

It is found in the nucleus. May be involved in transcriptional regulation. Positively modulates wnt-beta-catenin/ctnnb1 signaling. Required for embryonic neurogenesis. Required for progression through late erythroid differentiation. This is Activity-dependent neuroprotective protein a from Danio rerio (Zebrafish).